Consider the following 88-residue polypeptide: Small ribosomal subunit protein bS20 (88 aa).

It belongs to the bacterial ribosomal protein bS20 family.

Binds directly to 16S ribosomal RNA. The chain is Small ribosomal subunit protein bS20 from Bartonella tribocorum (strain CIP 105476 / IBS 506).